A 127-amino-acid chain; its full sequence is Fluoride-specific ion channel FluC (127 aa).

A run of 4 helical transmembrane segments spans residues 4–24, 35–55, 71–91, and 103–123; these read LLLAVFIGGGTGSVARWMLSM, LGTLAANLLGAFIIGMGFAWF, TGFCGGLTTFSTFSAEVVFLL, and VLVNLLGSFAMTALAFWIFSA. Na(+) is bound by residues Gly75 and Thr78.

Belongs to the fluoride channel Fluc/FEX (TC 1.A.43) family.

It is found in the cell inner membrane. The enzyme catalyses fluoride(in) = fluoride(out). Na(+) is not transported, but it plays an essential structural role and its presence is essential for fluoride channel function. In terms of biological role, fluoride-specific ion channel. Important for reducing fluoride concentration in the cell, thus reducing its toxicity. In Escherichia fergusonii (strain ATCC 35469 / DSM 13698 / CCUG 18766 / IAM 14443 / JCM 21226 / LMG 7866 / NBRC 102419 / NCTC 12128 / CDC 0568-73), this protein is Fluoride-specific ion channel FluC.